A 418-amino-acid chain; its full sequence is Ras association domain-containing protein 5 (418 aa).

Residues 1 to 118 (MAMASPAIGQ…QPQDPRVPAE (118 aa)) are disordered. An N-acetylthreonine modification is found at Ala2. The span at 77–89 (SRPARPLRPGLQQ) shows a compositional bias: low complexity. The Phorbol-ester/DAG-type zinc-finger motif lies at 122 to 170 (GHCFAELVLPGGPGWCDLCGREVLRQALRCTNCKFTCHPECRSLIQLDC). Residues Ser182 and Ser279 each carry the phosphoserine modification. One can recognise a Ras-associating domain in the interval 274 to 364 (TDKRTSFYLP…LSFVLKENET (91 aa)). The residue at position 352 (Thr352) is a Phosphothreonine. One can recognise an SARAH domain in the interval 366–413 (EVEWDAFSIPELQNFLTILEKEEQDKIQQVQKKYDKFRQKLEEALRES).

Interacts directly with activated HRAS; a RASSF5-STK4/MST1 complex probably associates with activated HRAS. Interacts with KRAS. Probably interacts with Ras-like GTPases RRAS, MRAS, RAP1B, RAP2A and RALA. Interacts with RRAS2. Can self-associate. Interacts with RSSF1 isoform A. The RSSF1 isoform A-RSSF5 heterodimer probably mediates the association of RSSF1 with HRAS. Isoform 2 interacts with activated RAP1A and ITGAL/LFA-1. Binds STK4/MST1, inhibiting STK4/MST1 autoactivation. As to expression, widely expressed. Frequently down-regulated in lung tumor cell lines and primary lung tumors.

It is found in the cytoplasm. It localises to the cytoskeleton. Potential tumor suppressor. Seems to be involved in lymphocyte adhesion by linking RAP1A activation upon T-cell receptor or chemokine stimulation to integrin activation. Isoform 2 stimulates lymphocyte polarization and the patch-like distribution of ITGAL/LFA-1, resulting in an enhanced adhesion to ICAM1. Together with RAP1A may participate in regulation of microtubule growth. The association of isoform 2 with activated RAP1A is required for directional movement of endothelial cells during wound healing. May be involved in regulation of Ras apoptotic function. The RASSF5-STK4/MST1 complex may mediate HRAS and KRAS induced apoptosis. The sequence is that of Ras association domain-containing protein 5 (RASSF5) from Homo sapiens (Human).